The chain runs to 429 residues: Glutamate-1-semialdehyde 2,1-aminomutase (429 aa).

K267 carries the post-translational modification N6-(pyridoxal phosphate)lysine.

The protein belongs to the class-III pyridoxal-phosphate-dependent aminotransferase family. HemL subfamily. Homodimer. Requires pyridoxal 5'-phosphate as cofactor.

The protein resides in the cytoplasm. It carries out the reaction (S)-4-amino-5-oxopentanoate = 5-aminolevulinate. Its pathway is porphyrin-containing compound metabolism; protoporphyrin-IX biosynthesis; 5-aminolevulinate from L-glutamyl-tRNA(Glu): step 2/2. The chain is Glutamate-1-semialdehyde 2,1-aminomutase from Xanthomonas axonopodis pv. citri (strain 306).